The sequence spans 358 residues: Nicotinate-nucleotide--dimethylbenzimidazole phosphoribosyltransferase (358 aa).

The active-site Proton acceptor is the glutamate 314.

This sequence belongs to the CobT family.

The enzyme catalyses 5,6-dimethylbenzimidazole + nicotinate beta-D-ribonucleotide = alpha-ribazole 5'-phosphate + nicotinate + H(+). Its pathway is nucleoside biosynthesis; alpha-ribazole biosynthesis; alpha-ribazole from 5,6-dimethylbenzimidazole: step 1/2. Catalyzes the synthesis of alpha-ribazole-5'-phosphate from nicotinate mononucleotide (NAMN) and 5,6-dimethylbenzimidazole (DMB). The chain is Nicotinate-nucleotide--dimethylbenzimidazole phosphoribosyltransferase from Mycobacterium ulcerans (strain Agy99).